Here is a 432-residue protein sequence, read N- to C-terminus: Adenylosuccinate synthetase (432 aa).

GTP-binding positions include 13 to 19 (GDEGKGK) and 41 to 43 (GHT). Aspartate 14 (proton acceptor) is an active-site residue. Residues aspartate 14 and glycine 41 each coordinate Mg(2+). IMP contacts are provided by residues 14 to 17 (DEGK), 39 to 42 (NAGH), threonine 130, arginine 144, glutamine 225, threonine 240, and arginine 304. Catalysis depends on histidine 42, which acts as the Proton donor. 300–306 (ATTGRRR) provides a ligand contact to substrate. GTP contacts are provided by residues arginine 306, 332 to 334 (KLD), and 415 to 417 (STG).

It belongs to the adenylosuccinate synthetase family. Homodimer. Mg(2+) is required as a cofactor.

Its subcellular location is the cytoplasm. The enzyme catalyses IMP + L-aspartate + GTP = N(6)-(1,2-dicarboxyethyl)-AMP + GDP + phosphate + 2 H(+). The protein operates within purine metabolism; AMP biosynthesis via de novo pathway; AMP from IMP: step 1/2. Functionally, plays an important role in the de novo pathway of purine nucleotide biosynthesis. Catalyzes the first committed step in the biosynthesis of AMP from IMP. The sequence is that of Adenylosuccinate synthetase from Serratia proteamaculans (strain 568).